Here is a 616-residue protein sequence, read N- to C-terminus: ATP-dependent zinc metalloprotease FtsH (616 aa).

The Cytoplasmic portion of the chain corresponds to 1–8 (MRNLFKTA). The helical transmembrane segment at 9-29 (TIYILIALVILLLVDIFSGGL) threads the bilayer. Topologically, residues 30–114 (SYNQFFSNLS…VTKEPPQVPW (85 aa)) are extracellular. A helical transmembrane segment spans residues 115–135 (WLSTFLPMLIFAGLMIFVWIF). At 136 to 616 (MLQQTQGGGS…VFEDAQPQLV (481 aa)) the chain is on the cytoplasmic side. 208 to 215 (GPPGTGKT) contacts ATP. His430 contributes to the Zn(2+) binding site. Residue Glu431 is part of the active site. The Zn(2+) site is built by His434 and Asp506.

The protein in the central section; belongs to the AAA ATPase family. It in the C-terminal section; belongs to the peptidase M41 family. Homohexamer. The cofactor is Zn(2+).

The protein resides in the cell membrane. Acts as a processive, ATP-dependent zinc metallopeptidase for both cytoplasmic and membrane proteins. Plays a role in the quality control of integral membrane proteins. This is ATP-dependent zinc metalloprotease FtsH from Caldicellulosiruptor bescii (strain ATCC BAA-1888 / DSM 6725 / KCTC 15123 / Z-1320) (Anaerocellum thermophilum).